Reading from the N-terminus, the 309-residue chain is Fructosamine-3-kinase (309 aa).

Met1 is modified (N-acetylmethionine). 89–91 (EHL) contacts ATP. Asp217 acts as the Proton acceptor in catalysis.

It belongs to the fructosamine kinase family. Monomer. In terms of tissue distribution, expressed in red blood cells, brain, heart, kidney and muscle. Lower expression is observed in liver. Not expressed in lung, spleen, testis and thymus.

It catalyses the reaction N(6)-(D-fructosyl)-L-lysyl-[protein] + ATP = N(6)-(3-O-phospho-D-fructosyl)-L-lysyl-[protein] + ADP + H(+). It carries out the reaction N(6)-D-ribulosyl-L-lysyl-[protein] + ATP = N(6)-(3-O-phospho-D-ribulosyl)-L-lysyl-[protein] + ADP + H(+). The catalysed reaction is N(6)-(D-psicosyl)-L-lysyl-[protein] + ATP = N(6)-(3-O-phospho-D-psicosyl)-L-lysyl-[protein] + ADP + H(+). Fructosamine-3-kinase involved in protein deglycation by mediating phosphorylation of fructoselysine residues on glycated proteins, to generate fructoselysine-3 phosphate. Fructoselysine-3 phosphate adducts are unstable and decompose under physiological conditions. Involved in intracellular deglycation in erythrocytes and pancreatic islets. Involved in the response to oxidative stress by mediating deglycation of NFE2L2/NRF2, glycation impairing NFE2L2/NRF2 function. Also able to phosphorylate psicosamines and ribulosamines. This chain is Fructosamine-3-kinase, found in Mus musculus (Mouse).